A 456-amino-acid chain; its full sequence is UDP-N-acetylmuramoylalanine--D-glutamate ligase (456 aa).

122–128 is an ATP binding site; the sequence is GSNGKST.

It belongs to the MurCDEF family.

It is found in the cytoplasm. It catalyses the reaction UDP-N-acetyl-alpha-D-muramoyl-L-alanine + D-glutamate + ATP = UDP-N-acetyl-alpha-D-muramoyl-L-alanyl-D-glutamate + ADP + phosphate + H(+). The protein operates within cell wall biogenesis; peptidoglycan biosynthesis. Functionally, cell wall formation. Catalyzes the addition of glutamate to the nucleotide precursor UDP-N-acetylmuramoyl-L-alanine (UMA). The polypeptide is UDP-N-acetylmuramoylalanine--D-glutamate ligase (Saccharophagus degradans (strain 2-40 / ATCC 43961 / DSM 17024)).